A 396-amino-acid chain; its full sequence is Elongation factor Tu 1 (396 aa).

One can recognise a tr-type G domain in the interval 10–206 (KPHVNVGTIG…ALDTYIPTPE (197 aa)). The G1 stretch occupies residues 19–26 (GHVDHGKT). 19–26 (GHVDHGKT) contributes to the GTP binding site. Threonine 26 contributes to the Mg(2+) binding site. The tract at residues 60–64 (GITIN) is G2. A G3 region spans residues 81-84 (DCPG). GTP-binding positions include 81 to 85 (DCPGH) and 136 to 139 (NKCD). The G4 stretch occupies residues 136–139 (NKCD). The tract at residues 174–176 (SAK) is G5.

It belongs to the TRAFAC class translation factor GTPase superfamily. Classic translation factor GTPase family. EF-Tu/EF-1A subfamily. Monomer.

The protein resides in the cytoplasm. It carries out the reaction GTP + H2O = GDP + phosphate + H(+). Its function is as follows. GTP hydrolase that promotes the GTP-dependent binding of aminoacyl-tRNA to the A-site of ribosomes during protein biosynthesis. This Acidovorax sp. (strain JS42) protein is Elongation factor Tu 1.